We begin with the raw amino-acid sequence, 384 residues long: ATP synthase subunit a (384 aa).

Residues 22–60 (PAPAAAPVEQHGAPAPEAAAPDAHAAPAGEHGAAVEAHA) form a disordered region. The next 6 helical transmembrane spans lie at 131-151 (KHVM…LAAV), 189-209 (FVPY…FGLI), 218-238 (NLSV…YAAI), 258-278 (LAPL…TKPF), 293-313 (FVIL…VAFG), and 319-339 (LGIF…FTML). The tract at residues 355–384 (HGHAEEHGHAGPGMGSEHGSHVAGASPGHG) is disordered.

The protein belongs to the ATPase A chain family. As to quaternary structure, F-type ATPases have 2 components, CF(1) - the catalytic core - and CF(0) - the membrane proton channel. CF(1) has five subunits: alpha(3), beta(3), gamma(1), delta(1), epsilon(1). CF(0) has three main subunits: a(1), b(2) and c(9-12). The alpha and beta chains form an alternating ring which encloses part of the gamma chain. CF(1) is attached to CF(0) by a central stalk formed by the gamma and epsilon chains, while a peripheral stalk is formed by the delta and b chains.

Its subcellular location is the cell inner membrane. Its function is as follows. Key component of the proton channel; it plays a direct role in the translocation of protons across the membrane. This Anaeromyxobacter dehalogenans (strain 2CP-1 / ATCC BAA-258) protein is ATP synthase subunit a.